The sequence spans 499 residues: Thioredoxin reductase 1, cytoplasmic (499 aa).

FAD-binding positions include 22–23 (SG), 42–43 (DF), 58–59 (TC), and 63–67 (SCIPK). A disulfide bridge links Cys-59 with Cys-64. At Lys-68 the chain carries N6-succinyllysine. At Tyr-131 the chain carries Phosphotyrosine. Residues 131–132 (YG) and Thr-161 contribute to the FAD site. NADP(+) is bound by residues Arg-166, 198 to 204 (ASYVALE), 221 to 222 (RS), Arg-226, 226 to 228 (RGF), 292 to 293 (GR), and Lys-315. Tyr-200 is an FAD binding site. FAD contacts are provided by residues Asp-334, 341 to 343 (ELT), and His-472. Residue Glu-341 coordinates NADP(+). The active-site Proton acceptor is the His-472. The cysteinyl-selenocysteine (Cys-Sec) cross-link spans 497–498 (CU). Residue Sec-498 is a non-standard amino acid, selenocysteine.

Belongs to the class-I pyridine nucleotide-disulfide oxidoreductase family. In terms of assembly, homodimer. It depends on FAD as a cofactor. Post-translationally, ISGylated.

The protein resides in the cytoplasm. The catalysed reaction is [thioredoxin]-dithiol + NADP(+) = [thioredoxin]-disulfide + NADPH + H(+). It carries out the reaction H2O2 + NADPH + H(+) = NADP(+) + 2 H2O. Reduces disulfideprotein thioredoxin (Trx) to its dithiol-containing form. Homodimeric flavoprotein involved in the regulation of cellular redox reactions, growth and differentiation. Contains a selenocysteine residue at the C-terminal active site that is essential for catalysis. Also has reductase activity on hydrogen peroxide (H2O2). This chain is Thioredoxin reductase 1, cytoplasmic (TXNRD1), found in Sus scrofa (Pig).